The sequence spans 96 residues: Co-chaperonin GroES (96 aa).

It belongs to the GroES chaperonin family. In terms of assembly, heptamer of 7 subunits arranged in a ring. Interacts with the chaperonin GroEL.

Its subcellular location is the cytoplasm. Together with the chaperonin GroEL, plays an essential role in assisting protein folding. The GroEL-GroES system forms a nano-cage that allows encapsulation of the non-native substrate proteins and provides a physical environment optimized to promote and accelerate protein folding. GroES binds to the apical surface of the GroEL ring, thereby capping the opening of the GroEL channel. The chain is Co-chaperonin GroES from Aromatoleum aromaticum (strain DSM 19018 / LMG 30748 / EbN1) (Azoarcus sp. (strain EbN1)).